A 72-amino-acid polypeptide reads, in one-letter code: Large ribosomal subunit protein bL28 (72 aa).

The protein belongs to the bacterial ribosomal protein bL28 family.

This is Large ribosomal subunit protein bL28 from Chlorobaculum parvum (strain DSM 263 / NCIMB 8327) (Chlorobium vibrioforme subsp. thiosulfatophilum).